Consider the following 449-residue polypeptide: Ribulose bisphosphate carboxylase large chain (449 aa).

A propeptide spanning residues Met-1–Ser-2 is cleaved from the precursor. Pro-3 carries the N-acetylproline modification. The residue at position 14 (Lys-14) is an N6,N6,N6-trimethyllysine. Positions 123 and 173 each coordinate substrate. Residue Lys-175 is the Proton acceptor of the active site. Lys-177 serves as a coordination point for substrate. The Mg(2+) site is built by Lys-201, Asp-203, and Glu-204. The residue at position 201 (Lys-201) is an N6-carboxylysine. The Proton acceptor role is filled by His-294. Residues Arg-295, His-327, and Ser-379 each contribute to the substrate site.

Belongs to the RuBisCO large chain family. Type I subfamily. Heterohexadecamer of 8 large chains and 8 small chains; disulfide-linked. The disulfide link is formed within the large subunit homodimers. Requires Mg(2+) as cofactor. In terms of processing, the disulfide bond which can form in the large chain dimeric partners within the hexadecamer appears to be associated with oxidative stress and protein turnover.

The protein resides in the plastid. It is found in the chloroplast. It catalyses the reaction 2 (2R)-3-phosphoglycerate + 2 H(+) = D-ribulose 1,5-bisphosphate + CO2 + H2O. The enzyme catalyses D-ribulose 1,5-bisphosphate + O2 = 2-phosphoglycolate + (2R)-3-phosphoglycerate + 2 H(+). Functionally, ruBisCO catalyzes two reactions: the carboxylation of D-ribulose 1,5-bisphosphate, the primary event in carbon dioxide fixation, as well as the oxidative fragmentation of the pentose substrate in the photorespiration process. Both reactions occur simultaneously and in competition at the same active site. The chain is Ribulose bisphosphate carboxylase large chain from Hippocratea richardiana.